A 496-amino-acid chain; its full sequence is Maintenance of mitochondrial morphology protein 1 (496 aa).

The Lumenal portion of the chain corresponds to 1–22 (MSSQLNDPTPIPAQSSLSFTQG). The chain crosses the membrane as a helical span at residues 23–43 (FLLGQLSVVLLIAAFIKFFIF). Residues 44-496 (GEAPPPPSRG…SLPGGGVTTT (453 aa)) lie on the Cytoplasmic side of the membrane. 4 disordered regions span residues 50–96 (PSRG…VPSS), 276–331 (PLDT…KSNV), 395–433 (GRTG…SREP), and 449–496 (DLAS…VTTT). The span at 54–64 (LSHRSATHRRS) shows a compositional bias: basic residues. Over residues 65-74 (NSIYSSTQHD) the composition is skewed to polar residues. Residues 75 to 84 (GNTRTLREKP) are compositionally biased toward basic and acidic residues. Residues 85–96 (SNSNVLRPVPSS) show a composition bias toward polar residues. Positions 131 to 388 (QPESLDWFNV…EPRVQVVGLP (258 aa)) constitute an SMP-LTD domain. The segment covering 276–287 (PLDTPSHSPSPP) has biased composition (pro residues). Residues 407 to 418 (TGSNAPRSSTAA) are compositionally biased toward polar residues. 2 stretches are compositionally biased toward basic and acidic residues: residues 424–433 (AHHEDSSREP) and 462–474 (GDLR…REES).

Belongs to the MMM1 family. Homodimer. Component of the ER-mitochondria encounter structure (ERMES) or MDM complex, composed of mmm1, mdm10, mdm12 and mdm34. A mmm1 homodimer associates with one molecule of mdm12 on each side in a pairwise head-to-tail manner, and the SMP-LTD domains of mmm1 and mdm12 generate a continuous hydrophobic tunnel for phospholipid trafficking.

The protein localises to the endoplasmic reticulum membrane. Component of the ERMES/MDM complex, which serves as a molecular tether to connect the endoplasmic reticulum (ER) and mitochondria. Components of this complex are involved in the control of mitochondrial shape and protein biogenesis, and function in nonvesicular lipid trafficking between the ER and mitochondria. The mdm12-mmm1 subcomplex functions in the major beta-barrel assembly pathway that is responsible for biogenesis of all outer membrane beta-barrel proteins, and acts in a late step after the SAM complex. The mdm10-mdm12-mmm1 subcomplex further acts in the TOM40-specific pathway after the action of the mdm12-mmm1 complex. Essential for establishing and maintaining the structure of mitochondria and maintenance of mtDNA nucleoids. The chain is Maintenance of mitochondrial morphology protein 1 from Neosartorya fischeri (strain ATCC 1020 / DSM 3700 / CBS 544.65 / FGSC A1164 / JCM 1740 / NRRL 181 / WB 181) (Aspergillus fischerianus).